Reading from the N-terminus, the 185-residue chain is Large ribosomal subunit protein uL18 (185 aa).

It belongs to the universal ribosomal protein uL18 family. As to quaternary structure, part of the 50S ribosomal subunit. Contacts the 5S and 23S rRNAs.

Functionally, this is one of the proteins that bind and probably mediate the attachment of the 5S RNA into the large ribosomal subunit, where it forms part of the central protuberance. This chain is Large ribosomal subunit protein uL18, found in Halorubrum lacusprofundi (strain ATCC 49239 / DSM 5036 / JCM 8891 / ACAM 34).